The primary structure comprises 246 residues: Pyridoxine 5'-phosphate synthase (246 aa).

Asn-8 and Arg-19 together coordinate 3-amino-2-oxopropyl phosphate. His-44 acts as the Proton acceptor in catalysis. Residues Arg-46 and His-51 each coordinate 1-deoxy-D-xylulose 5-phosphate. Glu-76 acts as the Proton acceptor in catalysis. Thr-106 is a binding site for 1-deoxy-D-xylulose 5-phosphate. Residue His-198 is the Proton donor of the active site. 3-amino-2-oxopropyl phosphate contacts are provided by residues Asp-199 and 221-222 (GH).

It belongs to the PNP synthase family. In terms of assembly, homooctamer; tetramer of dimers.

Its subcellular location is the cytoplasm. It carries out the reaction 3-amino-2-oxopropyl phosphate + 1-deoxy-D-xylulose 5-phosphate = pyridoxine 5'-phosphate + phosphate + 2 H2O + H(+). It participates in cofactor biosynthesis; pyridoxine 5'-phosphate biosynthesis; pyridoxine 5'-phosphate from D-erythrose 4-phosphate: step 5/5. Its function is as follows. Catalyzes the complicated ring closure reaction between the two acyclic compounds 1-deoxy-D-xylulose-5-phosphate (DXP) and 3-amino-2-oxopropyl phosphate (1-amino-acetone-3-phosphate or AAP) to form pyridoxine 5'-phosphate (PNP) and inorganic phosphate. This is Pyridoxine 5'-phosphate synthase from Brucella suis (strain ATCC 23445 / NCTC 10510).